The primary structure comprises 287 residues: Toxin zeta (287 aa).

Residue 40-47 (GQPGSGKT) coordinates ATP. The interval 250 to 287 (MVQNQHQETPEFKAIQQKMESLQPPTPPIPKTPKLPGI) is disordered. The span at 273–287 (PPTPPIPKTPKLPGI) shows a compositional bias: pro residues.

Belongs to the zeta toxin family. In the presence of the epsilon antitoxin, forms an inactive PezA(2)PezT(2) heterotetramer.

The enzyme catalyses UDP-N-acetyl-alpha-D-glucosamine + ATP = UDP-N-acetyl-alpha-D-glucosamine 3'-phosphate + ADP + H(+). Its function is as follows. Toxic component of a type II toxin-antitoxin (TA) system. Phosphorylates UDP-N-acetyl-D-glucosamine (UNAG) on the 3'-hydroxyl group of the N-acetyl-D-glucosamine moiety, yielding UNAG-3P. UNAG-3P inhibits MurA, the first committed step in cell wall synthesis, which is then blocked. Phosphorylation is inhibited by cognate epsilon antitoxin. Part of a postsegregational killing (PSK) system involved in the killing of plasmid-free cells. The zeta toxin induces programmed cell death. In Streptococcus agalactiae, this protein is Toxin zeta.